A 541-amino-acid chain; its full sequence is MAGVLAGDCSFGESGVSSYSRNSNEKQDEVARWYFGRKEIEENSPSRLDSIDLKKETYLRKSYCTFLQDLGMRLKVPQVTIATAIIFCHRFFIRQSHARNDRRTIATVCMFLAGKVEETPRPLKDVIVVSYEIIHKKDPTTAQKIKQKEVYEQQKELILNGEKIVLSTLGFDFNVYHPYKPLVEAIKKFKVAQNALAQVAWNFVNDGLRTSLCLQFKPHHIAAGAIFLAAKFLKVKLPSDGEKVWWQEFDVTPRQLEDVSNQMLELYEQNRVPASQVSEVESSVGGGSAHHVGSRPSARLTHEHSNSDNLGGSTKATQNRSNDNGSGEAGSVITEQKGERDTETKDSMHTESHPAHKSRSGVEAPGEDKIEKAGAHFPEDDKSRIVGTADVTVSQSPKDIKMFRDKVKAKLEAKKVQGEKTRKKDLVDEDDLIERELEDVELAVEDDKDIQNKSSMGTEHGEILDGNNLVVNTEEGEMIDDVSSTMPSRKRKMESPCEKQLGEGKRRHDNSENVEEGQKTNPGGSSHSYGDREPRRHSQER.

The tract at residues 277 to 366 (VSEVESSVGG…KSRSGVEAPG (90 aa)) is disordered. The span at 307-325 (SDNLGGSTKATQNRSNDNG) shows a compositional bias: polar residues. Basic and acidic residues predominate over residues 336-354 (QKGERDTETKDSMHTESHP). Ser-396 bears the Phosphoserine mark. Positions 445–541 (EDDKDIQNKS…REPRRHSQER (97 aa)) are disordered. Over residues 493 to 511 (MESPCEKQLGEGKRRHDNS) the composition is skewed to basic and acidic residues. Polar residues predominate over residues 519–528 (KTNPGGSSHS). Basic and acidic residues predominate over residues 529–541 (YGDREPRRHSQER).

It belongs to the cyclin family. Cyclin T subfamily.

This chain is Cyclin-T1-4 (CYCT1-4), found in Arabidopsis thaliana (Mouse-ear cress).